The primary structure comprises 1051 residues: Protein transport protein Sec16B (1051 aa).

The span at 1 to 23 shows a compositional bias: polar residues; that stretch reads MEPWVPQTQGRTTGPSRDTNRGL. The tract at residues 1–109 is disordered; that stretch reads MEPWVPQTQG…PYQRYHTPTP (109 aa). Residues 39–63 are compositionally biased toward basic and acidic residues; that stretch reads DKYHQWQDAHKNSKSQQDLRDDHQQ. The span at 64–77 shows a compositional bias: polar residues; that stretch reads SHSVSRSGEWSQPV. Residues S70 and S137 each carry the phosphoserine modification. The interval 157 to 203 is disordered; it reads EKHNGTFGANSDTQFQFTSKNPYRDSPASVSGQEQPGEFFPESEAQK. Positions 163–177 are enriched in polar residues; it reads FGANSDTQFQFTSKN. Phosphoserine is present on residues S182, S185, and S245. A central conserved domain (CCD); required for localization to endoplasmic reticulum exit sites region spans residues 263-708; sequence APMRFYVPHV…KHKDLEQNRT (446 aa). The span at 703-715 shows a compositional bias: basic and acidic residues; the sequence is LEQNRTGAPRDPD. Disordered stretches follow at residues 703 to 754, 798 to 820, and 850 to 1051; these read LEQN…LWST, SGAS…EDML, and TPAA…TQPC. The segment covering 737–754 has biased composition (polar residues); the sequence is GHQNYSEDSEYSSTLWST. The segment covering 798–809 has biased composition (low complexity); it reads SGASGSSVAVTG. Phosphothreonine is present on T850. A phosphoserine mark is found at S860, S863, S866, S874, and S875. Positions 877 to 897 are enriched in basic and acidic residues; it reads GADKPSHPDASQKGKLGDGKN. The segment covering 900 to 920 has biased composition (low complexity); the sequence is SSGFGWFSWFRSKPASSVSTS. Residues 921 to 932 show a composition bias toward acidic residues; it reads GDEDSSDSSDSE. Positions 936-947 are enriched in low complexity; that stretch reads RASSPHHASPGL. Residues 984–993 are compositionally biased toward gly residues; it reads EGMGIGGFSG. The span at 1022–1037 shows a compositional bias: polar residues; the sequence is NPSQVPQLPTASSLNR.

The protein belongs to the SEC16 family. As to quaternary structure, SEC16A and SEC16B are each present in multiple copies in a heteromeric complex. Interacts with TFG. Interacts with SEC13. As to expression, liver.

Its subcellular location is the endoplasmic reticulum membrane. It is found in the golgi apparatus membrane. Its function is as follows. Plays a role in the organization of the endoplasmic reticulum exit sites (ERES), also known as transitional endoplasmic reticulum (tER). Required for secretory cargo traffic from the endoplasmic reticulum to the Golgi apparatus. Involved in peroxisome biogenesis. Regulates the transport of peroxisomal biogenesis factors PEX3 and PEX16 from the ER to peroxisomes. This is Protein transport protein Sec16B (Sec16b) from Mus musculus (Mouse).